A 137-amino-acid chain; its full sequence is MANKPSPGELKNGLSEMQFYVTQHHGTEPPFTGRLLHNKKNGVYHCLVCDAPLFNSQTKYDSGCGWPSFYEPVSDEAIRYLTDNSHGMQRIEIRCGNCDAHLGHVFPDGPQPTGERYCVNSASLSFTDEQNGEQIKG.

A MsrB domain is found at 7-129 (PGELKNGLSE…NSASLSFTDE (123 aa)). Residues Cys-46, Cys-49, Cys-95, and Cys-98 each contribute to the Zn(2+) site. Residue Cys-118 is the Nucleophile of the active site.

It belongs to the MsrB Met sulfoxide reductase family. The cofactor is Zn(2+).

The catalysed reaction is L-methionyl-[protein] + [thioredoxin]-disulfide + H2O = L-methionyl-(R)-S-oxide-[protein] + [thioredoxin]-dithiol. This is Peptide methionine sulfoxide reductase MsrB from Klebsiella pneumoniae (strain 342).